Here is a 282-residue protein sequence, read N- to C-terminus: Small ribosomal subunit protein uS3 (282 aa).

Residues 43–111 (IRRLMSKGME…QVQLNILEVK (69 aa)) enclose the KH type-2 domain. The segment at 217-282 (AQSQAAAPRA…IGKGSNGTEA (66 aa)) is disordered. Positions 228–240 (RRNERGDRPDRGA) are enriched in basic and acidic residues. Low complexity predominate over residues 256–269 (AVATGSAPTGTAAT).

The protein belongs to the universal ribosomal protein uS3 family. As to quaternary structure, part of the 30S ribosomal subunit. Forms a tight complex with proteins S10 and S14.

Binds the lower part of the 30S subunit head. Binds mRNA in the 70S ribosome, positioning it for translation. The polypeptide is Small ribosomal subunit protein uS3 (Kineococcus radiotolerans (strain ATCC BAA-149 / DSM 14245 / SRS30216)).